The chain runs to 429 residues: Threonine synthase (429 aa).

Position 108 is an N6-(pyridoxal phosphate)lysine (Lys-108).

Belongs to the threonine synthase family. The cofactor is pyridoxal 5'-phosphate.

It carries out the reaction O-phospho-L-homoserine + H2O = L-threonine + phosphate. It participates in amino-acid biosynthesis; L-threonine biosynthesis; L-threonine from L-aspartate: step 5/5. Functionally, catalyzes the gamma-elimination of phosphate from L-phosphohomoserine and the beta-addition of water to produce L-threonine. The polypeptide is Threonine synthase (thrC) (Buchnera aphidicola subsp. Schizaphis graminum (strain Sg)).